The sequence spans 94 residues: Co-chaperonin GroES (94 aa).

This sequence belongs to the GroES chaperonin family. In terms of assembly, heptamer of 7 subunits arranged in a ring. Interacts with the chaperonin GroEL.

The protein localises to the cytoplasm. Its function is as follows. Together with the chaperonin GroEL, plays an essential role in assisting protein folding. The GroEL-GroES system forms a nano-cage that allows encapsulation of the non-native substrate proteins and provides a physical environment optimized to promote and accelerate protein folding. GroES binds to the apical surface of the GroEL ring, thereby capping the opening of the GroEL channel. The sequence is that of Co-chaperonin GroES from Streptococcus pneumoniae (strain ATCC BAA-255 / R6).